A 629-amino-acid chain; its full sequence is tRNA uridine 5-carboxymethylaminomethyl modification enzyme MnmG (629 aa).

13–18 contributes to the FAD binding site; the sequence is GGGHAG. An NAD(+)-binding site is contributed by 273–287; sequence GPRYCPSIEDKVVRF.

The protein belongs to the MnmG family. In terms of assembly, homodimer. Heterotetramer of two MnmE and two MnmG subunits. FAD is required as a cofactor.

The protein localises to the cytoplasm. In terms of biological role, NAD-binding protein involved in the addition of a carboxymethylaminomethyl (cmnm) group at the wobble position (U34) of certain tRNAs, forming tRNA-cmnm(5)s(2)U34. The chain is tRNA uridine 5-carboxymethylaminomethyl modification enzyme MnmG from Nitrosococcus oceani (strain ATCC 19707 / BCRC 17464 / JCM 30415 / NCIMB 11848 / C-107).